A 151-amino-acid polypeptide reads, in one-letter code: Cell division protein SepF (151 aa).

A compositionally biased stretch (acidic residues) spans Asp-17 to Gln-29. The interval Asp-17–His-42 is disordered.

This sequence belongs to the SepF family. Homodimer. Interacts with FtsZ.

The protein resides in the cytoplasm. Cell division protein that is part of the divisome complex and is recruited early to the Z-ring. Probably stimulates Z-ring formation, perhaps through the cross-linking of FtsZ protofilaments. Its function overlaps with FtsA. In Lacticaseibacillus casei (strain BL23) (Lactobacillus casei), this protein is Cell division protein SepF.